A 111-amino-acid chain; its full sequence is Putative pterin-4-alpha-carbinolamine dehydratase (111 aa).

The protein belongs to the pterin-4-alpha-carbinolamine dehydratase family.

It catalyses the reaction (4aS,6R)-4a-hydroxy-L-erythro-5,6,7,8-tetrahydrobiopterin = (6R)-L-erythro-6,7-dihydrobiopterin + H2O. In Alkaliphilus metalliredigens (strain QYMF), this protein is Putative pterin-4-alpha-carbinolamine dehydratase.